A 435-amino-acid chain; its full sequence is Nematode resistance protein-like HSPRO2 (435 aa).

In terms of assembly, interacts with SNF4.

The protein resides in the cytoplasm. In terms of biological role, positive regulator of basal resistance. The sequence is that of Nematode resistance protein-like HSPRO2 (HSPRO2) from Arabidopsis thaliana (Mouse-ear cress).